A 259-amino-acid polypeptide reads, in one-letter code: Probable metal transport system ATP-binding protein TC_0339 (259 aa).

The ABC transporter domain maps to 9–241; sequence WAVDDLCVNY…AIFQAYGCEL (233 aa). ATP is bound at residue 41-48; it reads GPNGAGKS.

This sequence belongs to the ABC transporter superfamily.

The protein localises to the cell inner membrane. Functionally, part of an ATP-driven transport system TC_0338/TC_0339/TC_0341/TC_0342 for a metal. Probably responsible for energy coupling to the transport system. This chain is Probable metal transport system ATP-binding protein TC_0339, found in Chlamydia muridarum (strain MoPn / Nigg).